We begin with the raw amino-acid sequence, 124 residues long: Large ribosomal subunit protein bL12 (124 aa).

The protein belongs to the bacterial ribosomal protein bL12 family. Homodimer. Part of the ribosomal stalk of the 50S ribosomal subunit. Forms a multimeric L10(L12)X complex, where L10 forms an elongated spine to which 2 to 4 L12 dimers bind in a sequential fashion. Binds GTP-bound translation factors.

Its function is as follows. Forms part of the ribosomal stalk which helps the ribosome interact with GTP-bound translation factors. Is thus essential for accurate translation. The sequence is that of Large ribosomal subunit protein bL12 from Cereibacter sphaeroides (strain ATCC 17025 / ATH 2.4.3) (Rhodobacter sphaeroides).